Reading from the N-terminus, the 31-residue chain is Cytochrome b6-f complex subunit 6 (31 aa).

The helical transmembrane segment at 4 to 24 (IISYFLFLIGALTLALVLFIG) threads the bilayer.

This sequence belongs to the PetL family. The 4 large subunits of the cytochrome b6-f complex are cytochrome b6, subunit IV (17 kDa polypeptide, PetD), cytochrome f and the Rieske protein, while the 4 small subunits are PetG, PetL, PetM and PetN. The complex functions as a dimer.

The protein resides in the plastid. It localises to the chloroplast thylakoid membrane. Component of the cytochrome b6-f complex, which mediates electron transfer between photosystem II (PSII) and photosystem I (PSI), cyclic electron flow around PSI, and state transitions. PetL is important for photoautotrophic growth as well as for electron transfer efficiency and stability of the cytochrome b6-f complex. The polypeptide is Cytochrome b6-f complex subunit 6 (Marchantia polymorpha (Common liverwort)).